The chain runs to 316 residues: Leucine-rich repeat-containing protein 73 (316 aa).

LRR repeat units follow at residues 57 to 78, 86 to 106, 114 to 137, 145 to 166, 174 to 187, 202 to 223, and 231 to 250; these read SLAQLNLNLGVVSSPSRIKQLA, SIQSLFLHGSPLTDAGLALLN, ALVALDLGDCMLGDEAINLICGLL, GLKELTLSANPGITPKGWSRLA, QVRVLNLDYNPLGD, TLEVLDLEGTGLTNQSAQTLLD, and ALRSLVLAENSISPELQQQI. Positions 257–296 are disordered; it reads GEEEEEVAGGAGDTQEWERGREPAAHQRGSSSWMCPSDPS. Basic and acidic residues predominate over residues 272–281; that stretch reads EWERGREPAA. The span at 286-296 shows a compositional bias: low complexity; it reads SSSWMCPSDPS.

The protein is Leucine-rich repeat-containing protein 73 (LRRC73) of Homo sapiens (Human).